A 561-amino-acid chain; its full sequence is DNA ligase B (561 aa).

Lys-125 (N6-AMP-lysine intermediate) is an active-site residue.

It belongs to the NAD-dependent DNA ligase family. LigB subfamily.

It carries out the reaction NAD(+) + (deoxyribonucleotide)n-3'-hydroxyl + 5'-phospho-(deoxyribonucleotide)m = (deoxyribonucleotide)n+m + AMP + beta-nicotinamide D-nucleotide.. Catalyzes the formation of phosphodiester linkages between 5'-phosphoryl and 3'-hydroxyl groups in double-stranded DNA using NAD as a coenzyme and as the energy source for the reaction. This Salmonella schwarzengrund (strain CVM19633) protein is DNA ligase B.